Reading from the N-terminus, the 294-residue chain is NAD kinase (294 aa).

The active-site Proton acceptor is the D72. NAD(+) is bound by residues 72 to 73 (DG), 146 to 147 (ND), R157, R174, D176, 187 to 192 (TAYALS), and Q247.

Belongs to the NAD kinase family. It depends on a divalent metal cation as a cofactor.

The protein localises to the cytoplasm. It catalyses the reaction NAD(+) + ATP = ADP + NADP(+) + H(+). Its function is as follows. Involved in the regulation of the intracellular balance of NAD and NADP, and is a key enzyme in the biosynthesis of NADP. Catalyzes specifically the phosphorylation on 2'-hydroxyl of the adenosine moiety of NAD to yield NADP. This is NAD kinase from Saccharophagus degradans (strain 2-40 / ATCC 43961 / DSM 17024).